The chain runs to 192 residues: Lipid A acyltransferase PagP (192 aa).

A signal peptide spans 1 to 29 (MVVNVVIVAKKYFLFITLLIIQVSLPAHA). Residues histidine 64, aspartate 107, and serine 108 contribute to the active site.

Belongs to the lipid A palmitoyltransferase family. As to quaternary structure, homodimer.

It localises to the cell outer membrane. It catalyses the reaction a lipid A + a 1,2-diacyl-sn-glycero-3-phosphocholine = a hepta-acyl lipid A + a 2-acyl-sn-glycero-3-phosphocholine. The catalysed reaction is a lipid IVA + a 1,2-diacyl-sn-glycero-3-phosphocholine = a lipid IVB + a 2-acyl-sn-glycero-3-phosphocholine. It carries out the reaction a lipid IIA + a 1,2-diacyl-sn-glycero-3-phosphocholine = a lipid IIB + a 2-acyl-sn-glycero-3-phosphocholine. Its function is as follows. Transfers a fatty acid residue from the sn-1 position of a phospholipid to the N-linked hydroxyfatty acid chain on the proximal unit of lipid A or its precursors. In Citrobacter rodentium (strain ICC168) (Citrobacter freundii biotype 4280), this protein is Lipid A acyltransferase PagP.